Here is a 400-residue protein sequence, read N- to C-terminus: S-adenosylmethionine synthase (400 aa).

Position 136–141 (136–141 (GTGSTD)) interacts with ATP.

The protein belongs to the AdoMet synthase 2 family. It depends on Mg(2+) as a cofactor.

It catalyses the reaction L-methionine + ATP + H2O = S-adenosyl-L-methionine + phosphate + diphosphate. It functions in the pathway amino-acid biosynthesis; S-adenosyl-L-methionine biosynthesis; S-adenosyl-L-methionine from L-methionine: step 1/1. Catalyzes the formation of S-adenosylmethionine from methionine and ATP. The polypeptide is S-adenosylmethionine synthase (Methanospirillum hungatei JF-1 (strain ATCC 27890 / DSM 864 / NBRC 100397 / JF-1)).